Here is a 508-residue protein sequence, read N- to C-terminus: Probable polyol transporter 3 (508 aa).

Transmembrane regions (helical) follow at residues 21 to 41, 60 to 80, 90 to 110, 120 to 140, 147 to 167, 178 to 198, 280 to 300, 318 to 338, 348 to 368, 384 to 404, 418 to 438, and 448 to 468; these read FAFG…YDTG, QIEV…LTAG, YTIA…GYGP, CIAG…SAEI, GFLT…GYVS, LGWR…AFGI, ILIA…EAVV, LLLA…IATF, LLLT…VSLT, IVST…ITWV, GASI…MSFL, and GVFF…FFML.

This sequence belongs to the major facilitator superfamily. Sugar transporter (TC 2.A.1.1) family.

The protein localises to the membrane. Its function is as follows. Plasma membrane sugar-proton symporter. In Arabidopsis thaliana (Mouse-ear cress), this protein is Probable polyol transporter 3 (PLT3).